The sequence spans 236 residues: CD81 protein (236 aa).

The Cytoplasmic portion of the chain corresponds to 1-12 (MGVEGCTKCIKY). Residues 13–33 (LLFVFNFVFWLAGGVILGVAL) traverse the membrane as a helical segment. Residues 34-63 (WLRHDPQTTNLLYLELGDKPAPNTFYVGIY) are Extracellular-facing. Residues 64-84 (ILIAVGAVMMFVGFLGCYGAI) traverse the membrane as a helical segment. Residues 85 to 89 (QESQC) lie on the Cytoplasmic side of the membrane. A helical transmembrane segment spans residues 90 to 112 (LLGTFFTCLVILFACEVAAGIWG). The Extracellular portion of the chain corresponds to 113 to 201 (FVNKDQIAKD…QKIDELFSGK (89 aa)). 2 cysteine pairs are disulfide-bonded: Cys-156–Cys-190 and Cys-157–Cys-175. A helical transmembrane segment spans residues 202 to 224 (LYLIGIAAIVVAVIMIFEMILSM). Residue Glu-219 participates in cholesterol binding. Residues 225-236 (VLCCGIRNSSVY) lie on the Cytoplasmic side of the membrane.

It belongs to the tetraspanin (TM4SF) family. As to quaternary structure, homodimer. Part of a complex composed of CD19, CR2/CD21, CD81 and IFITM1/CD225 in the membrane of mature B cells. Interacts (via the second extracellular domain) with CD19; this interaction is initiated early during biosynthesis in the ER and enables trafficking of only properly folded CD19. Part of a complex that includes MHC class II/HLA-DR molecules and IFITM1. Interacts with IFITM1. Interacts with IFITM2 and IFITM3. Part of integrin-tetraspanin complex composed of CD9, CD81, beta-1 and beta-2 integrins in the membrane of monocyte/macrophages. Interacts (via the second extracellular domain) with integrin ITGAV:ITGB3. Interacts with CD247/CD3 zeta, ICAM1 and CD9 at the immune synapse on T cell membrane. Part of a GPCR-tetraspanin complex consisting at least of ADGRG1, CD81, possibly CD9, and GNA11 in which CD81 enhances the association of ADGRG1 with GNA11. Part of a complex composed of CD9, CD81, PTGFRN and IGSF8. Interacts directly with IGSF8. Interacts with CD53 and SCIMP. Interacts with SAMHD1 (via its C-terminus). Interacts with glypican GPC3 and with the transcriptional repressor HHEX; binding to GPC3 decreases the availability of free CD81 for binding to HHEX, resulting in nuclear translocation of HHEX and transcriptional repression. Interacts with CLDN1. Interacts with CLDN6 and CLDN9. Not glycosylated. In terms of processing, likely constitutively palmitoylated at low levels. Protein palmitoylation is up-regulated upon coligation of BCR and CD9-C2R-CD81 complexes in lipid rafts.

It localises to the cell membrane. It is found in the basolateral cell membrane. In terms of biological role, structural component of specialized membrane microdomains known as tetraspanin-enriched microdomains (TERMs), which act as platforms for receptor clustering and signaling. Essential for trafficking and compartmentalization of CD19 receptor on the surface of activated B cells. Upon initial encounter with microbial pathogens, enables the assembly of CD19-CR2/CD21 and B cell receptor (BCR) complexes at signaling TERMs, lowering the threshold dose of antigen required to trigger B cell clonal expansion and antibody production. In T cells, facilitates the localization of CD247/CD3 zeta at antigen-induced synapses with B cells, providing for costimulation and polarization toward T helper type 2 phenotype. Present in MHC class II compartments, may also play a role in antigen presentation. Can act both as positive and negative regulator of homotypic or heterotypic cell-cell fusion processes. Positively regulates sperm-egg fusion and may be involved in acrosome reaction. In myoblasts, associates with CD9 and PTGFRN and inhibits myotube fusion during muscle regeneration. In macrophages, associates with CD9 and beta-1 and beta-2 integrins, and prevents macrophage fusion into multinucleated giant cells specialized in ingesting complement-opsonized large particles. Also prevents the fusion of mononuclear cell progenitors into osteoclasts in charge of bone resorption. May regulate the compartmentalization of enzymatic activities. In T cells, defines the subcellular localization of dNTPase SAMHD1 and permits its degradation by the proteasome, thereby controlling intracellular dNTP levels. Also involved in cell adhesion and motility. Positively regulates integrin-mediated adhesion of macrophages, particularly relevant for the inflammatory response in the lung. The chain is CD81 protein (CD81) from Saguinus oedipus (Cotton-top tamarin).